Consider the following 134-residue polypeptide: Iron-sulfur cluster insertion protein ErpA (134 aa).

Iron-sulfur cluster contacts are provided by C47, C126, and C128.

The protein belongs to the HesB/IscA family. As to quaternary structure, homodimer. The cofactor is iron-sulfur cluster.

Required for insertion of 4Fe-4S clusters for at least IspG. This is Iron-sulfur cluster insertion protein ErpA from Coxiella burnetii (strain Dugway 5J108-111).